The chain runs to 299 residues: Taste receptor type 2 member 1 (299 aa).

Residues 1-9 lie on the Extracellular side of the membrane; it reads MLESHLIIY. Residues 10 to 30 form a helical membrane-spanning segment; sequence FLLAVIQFLLGTFTNGIIVVV. Over 31-55 the chain is Cytoplasmic; that stretch reads NGIDLIKHRKMAPLDLLLSCLAVSR. A helical membrane pass occupies residues 56-76; sequence IFLQLFIFYINVVVIFLIEFI. Over 77–81 the chain is Extracellular; the sequence is TCSAS. Residues 82–102 traverse the membrane as a helical segment; the sequence is CAFLVFVNELELWLATWLGVF. The Cytoplasmic segment spans residues 103 to 124; sequence YCAKVASVLHPLFIWLKMRISK. A helical transmembrane segment spans residues 125 to 145; that stretch reads SVPWMILGSLLYVSMICIFHI. Over 146–178 the chain is Extracellular; it reads KYTGFMVPYFLRNLFFQNATIQTEVKQAIQIFS. Asn-163 carries an N-linked (GlcNAc...) asparagine glycan. Residues 179–199 form a helical membrane-spanning segment; the sequence is FVAELLVPLLIFLVAVLLLIF. The Cytoplasmic portion of the chain corresponds to 200-222; the sequence is SLGRHTRQMRNTVAGSRVPGRGA. The chain crosses the membrane as a helical span at residues 223 to 243; it reads HISALLSILSFLILYISHYLI. The Extracellular portion of the chain corresponds to 244–257; that stretch reads KTFLSSLKFHVKRF. A helical membrane pass occupies residues 258-278; sequence VFLFCILVIGTYPSGHSLILI. The Cytoplasmic segment spans residues 279 to 299; the sequence is LGNPKLKQNTKKFLCHSKCCQ.

Belongs to the G-protein coupled receptor T2R family.

The protein localises to the membrane. Receptor that may play a role in the perception of bitterness and is gustducin-linked. May play a role in sensing the chemical composition of the gastrointestinal content. The activity of this receptor may stimulate alpha gustducin, mediate PLC-beta-2 activation and lead to the gating of TRPM5. This Chlorocebus aethiops (Green monkey) protein is Taste receptor type 2 member 1 (TAS2R1).